An 89-amino-acid polypeptide reads, in one-letter code: Small ribosomal subunit protein uS14A (89 aa).

Belongs to the universal ribosomal protein uS14 family. In terms of assembly, part of the 30S ribosomal subunit. Contacts proteins S3 and S10.

Functionally, binds 16S rRNA, required for the assembly of 30S particles and may also be responsible for determining the conformation of the 16S rRNA at the A site. In Listeria monocytogenes serovar 1/2a (strain ATCC BAA-679 / EGD-e), this protein is Small ribosomal subunit protein uS14A.